The chain runs to 593 residues: Aspartate--tRNA(Asp/Asn) ligase (593 aa).

Position 173 (E173) interacts with L-aspartate. The aspartate stretch occupies residues 197–200 (QLFK). L-aspartate is bound at residue R219. Residues 219–221 (RDE) and Q228 contribute to the ATP site. H451 lines the L-aspartate pocket. Residue E485 participates in ATP binding. R492 is an L-aspartate binding site. Residue 537–540 (GIDR) coordinates ATP.

Belongs to the class-II aminoacyl-tRNA synthetase family. Type 1 subfamily. As to quaternary structure, homodimer.

The protein resides in the cytoplasm. The enzyme catalyses tRNA(Asx) + L-aspartate + ATP = L-aspartyl-tRNA(Asx) + AMP + diphosphate. Functionally, aspartyl-tRNA synthetase with relaxed tRNA specificity since it is able to aspartylate not only its cognate tRNA(Asp) but also tRNA(Asn). Reaction proceeds in two steps: L-aspartate is first activated by ATP to form Asp-AMP and then transferred to the acceptor end of tRNA(Asp/Asn). The polypeptide is Aspartate--tRNA(Asp/Asn) ligase (Legionella pneumophila subsp. pneumophila (strain Philadelphia 1 / ATCC 33152 / DSM 7513)).